A 274-amino-acid chain; its full sequence is MTAILPSTAATVNTGFLHFDCVGKTFPTPRGPYVAIEDVNLSVQQGEFICVIGHSGCGKSTLLNLVSGFSQPTSGGVYLDGQPIQEPGPDRMVVFQNYSLLPWKSARDNIALAVKAARPHLSTSEQRQVVDHHLELVGLTEAQHKRPDQLSGGMKQRVAIARALSIRPEVLILDEPFGALDAITKEELQEELLNIWEEARPTVLMITHDIDEALFLADRVVMMTNGPAATIGEVLEIPFDRPREREAVVEDPRYAQLRTEALDFLYRRFAHDDD.

An ABC transporter domain is found at 17-250 (LHFDCVGKTF…RPREREAVVE (234 aa)). 53 to 60 (GHSGCGKS) serves as a coordination point for ATP.

This sequence belongs to the ABC transporter superfamily. Nitrate/nitrite/cyanate uptake transporter (NitT) (TC 3.A.1.16) family. The complex is composed of two ATP-binding proteins (NrtC and NrtD), two transmembrane proteins (NrtB) and a solute-binding protein (NrtA).

It is found in the cell inner membrane. The catalysed reaction is nitrate(out) + ATP + H2O = nitrate(in) + ADP + phosphate + H(+). Part of the ABC transporter complex NrtABCD involved in nitrate uptake. The complex is probably also involved in nitrite transport. Probably responsible for energy coupling to the transport system. This is Nitrate import ATP-binding protein NrtD from Synechococcus elongatus (strain ATCC 33912 / PCC 7942 / FACHB-805) (Anacystis nidulans R2).